We begin with the raw amino-acid sequence, 715 residues long: Tensin-4 (715 aa).

The first 18 residues, 1-18 (MSQVMSSPLLAGGHAVSL), serve as a signal peptide directing secretion. Residue serine 82 is modified to Phosphoserine. Disordered regions lie at residues 159 to 183 (RCHD…RSGG), 195 to 251 (RSSS…SPLV), 291 to 364 (SLLH…CPPS), and 376 to 435 (LING…ARDM). A compositionally biased stretch (polar residues) spans 197–206 (SSESLIFSGN). A Phosphoserine modification is found at serine 248. The span at 291–325 (SLLHSSNSSHQSSSRSLESPANSSSSLHSLGSVSL) shows a compositional bias: low complexity. The SH2 domain maps to 449 to 556 (WFKPNITREQ…ALPCKLTIPQ (108 aa)). Residues 582-705 (CHTLYLSSVS…QPASQVIGLV (124 aa)) enclose the PTB domain.

Belongs to the PTEN phosphatase protein family. Interacts (via SH2 domain) with Rho GTPase-activating protein DLC1 (via C-terminus); the interaction is independent of DLC1 tyrosine phosphorylation. Interacts with integrin ITGB1; the interaction displaces tensin TNS3 from the ITGB1 cytoplasmic tail and promotes ITGB1 stability. Interacts (via SH2 domain) with E3 ubiquitin-protein ligase CBL (phosphorylated on 'Tyr-774'); the interaction is enhanced in the presence of EGF and reduces interaction of CBL with EGFR. Interacts (via SH2 domain) with receptor tyrosine kinase MET (when phosphorylated); the interaction increases MET protein stability. Post-translationally, proteolytically cleaved by caspase-3 during apoptosis. Expressed at low levels in colon (at protein level). Expressed in prostate and placenta.

The protein resides in the cell junction. The protein localises to the focal adhesion. Its subcellular location is the cytoplasm. It localises to the cytoskeleton. Promotes EGF-induced cell migration by displacing tensin TNS3 from the cytoplasmic tail of integrin ITGB1 which results in dissociation of TNS3 from focal adhesions, disassembly of actin stress fibers and initiation of cell migration. Suppresses ligand-induced degradation of EGFR by reducing EGFR ubiquitination in the presence of EGF. Increases MET protein stability by inhibiting MET endocytosis and subsequent lysosomal degradation which leads to increased cell survival, proliferation and migration. This chain is Tensin-4 (TNS4), found in Homo sapiens (Human).